A 229-amino-acid chain; its full sequence is Enolase-phosphatase E1 (229 aa).

It belongs to the HAD-like hydrolase superfamily. MasA/MtnC family. As to quaternary structure, monomer. It depends on Mg(2+) as a cofactor.

It catalyses the reaction 5-methylsulfanyl-2,3-dioxopentyl phosphate + H2O = 1,2-dihydroxy-5-(methylsulfanyl)pent-1-en-3-one + phosphate. The protein operates within amino-acid biosynthesis; L-methionine biosynthesis via salvage pathway; L-methionine from S-methyl-5-thio-alpha-D-ribose 1-phosphate: step 3/6. Its pathway is amino-acid biosynthesis; L-methionine biosynthesis via salvage pathway; L-methionine from S-methyl-5-thio-alpha-D-ribose 1-phosphate: step 4/6. Functionally, bifunctional enzyme that catalyzes the enolization of 2,3-diketo-5-methylthiopentyl-1-phosphate (DK-MTP-1-P) into the intermediate 2-hydroxy-3-keto-5-methylthiopentenyl-1-phosphate (HK-MTPenyl-1-P), which is then dephosphorylated to form the acireductone 1,2-dihydroxy-3-keto-5-methylthiopentene (DHK-MTPene). The protein is Enolase-phosphatase E1 of Yersinia pestis (strain Pestoides F).